We begin with the raw amino-acid sequence, 368 residues long: Ubl carboxyl-terminal hydrolase 18 (368 aa).

Residues 31–48 are mediates interaction with IFNAR2; it reads MKRKRVLSRDLCSAWDSP. The segment at 48 to 109 is mediates interaction with STAT2; sequence PHGLVGLHNI…LLLLLEKMQD (62 aa). The USP domain occupies 52–366; sequence VGLHNIGQTC…TAYLLVYTKT (315 aa). The active-site Nucleophile is the Cys61. The mediates interaction with STAT2 and necessary for the negative regulation of the type I IFN signaling pathway stretch occupies residues 299 to 308; it reads ELFAVIAHVG. Positions 309–368 are mediates interaction with IFNAR2; the sequence is MADFGHYCAYIRNPVDGKWFCFNDSHVCWVTWKDVQCTYGNHRYRWRETAYLLVYTKTGS. His314 (proton acceptor) is an active-site residue.

It belongs to the peptidase C19 family. As to quaternary structure, interacts with STAT2; the interaction is direct. Interacts with IFNAR2; indirectly via STAT2, it negatively regulates the assembly of the ternary interferon-IFNAR1-IFNAR2 complex and inhibits type I interferon signaling. Interacts with STING1. Interacts with USP20.

The catalysed reaction is Thiol-dependent hydrolysis of ester, thioester, amide, peptide and isopeptide bonds formed by the C-terminal Gly of ubiquitin (a 76-residue protein attached to proteins as an intracellular targeting signal).. Its function is as follows. Interferon-induced ISG15-specific protease that plays a crucial role for maintaining a proper balance of ISG15-conjugated proteins in cells. Regulates protein ISGylation by efficiently cleaving ISG15 conjugates linked via isopeptide bonds. Regulates T-cell activation and T-helper 17 (Th17) cell differentiation by deubiquitinating TAK1, likely to keep TAK1-TAB complexes in steady conditions. In turn, restricts activation of NF-kappa-B, NFAT, and JNK as well as expression of IL2 in T-cells after TCR activation. Acts as a molecular adapter with USP20 to promote innate antiviral response through deubiquitinating STING1. Involved also in the negative regulation of the inflammatory response triggered by type I interferon. Upon recruitment by STAT2 to the type I interferon receptor subunit IFNAR2 interferes with the assembly of the ternary interferon-IFNAR1-IFNAR2 complex and acts as a negative regulator of the type I interferon signaling pathway. In Mus musculus (Mouse), this protein is Ubl carboxyl-terminal hydrolase 18 (Usp18).